A 271-amino-acid polypeptide reads, in one-letter code: Shikimate dehydrogenase (NADP(+)) (271 aa).

Residues 14 to 16 and threonine 61 contribute to the shikimate site; that span reads SLS. The Proton acceptor role is filled by lysine 65. 2 residues coordinate shikimate: asparagine 86 and aspartate 101. NADP(+)-binding positions include 125–129 and isoleucine 212; that span reads GAGGA. Residue tyrosine 214 participates in shikimate binding. Glycine 235 is a binding site for NADP(+).

It belongs to the shikimate dehydrogenase family. As to quaternary structure, homodimer.

It carries out the reaction shikimate + NADP(+) = 3-dehydroshikimate + NADPH + H(+). It functions in the pathway metabolic intermediate biosynthesis; chorismate biosynthesis; chorismate from D-erythrose 4-phosphate and phosphoenolpyruvate: step 4/7. Functionally, involved in the biosynthesis of the chorismate, which leads to the biosynthesis of aromatic amino acids. Catalyzes the reversible NADPH linked reduction of 3-dehydroshikimate (DHSA) to yield shikimate (SA). The polypeptide is Shikimate dehydrogenase (NADP(+)) (Clostridium perfringens (strain 13 / Type A)).